A 219-amino-acid polypeptide reads, in one-letter code: Thymidylate kinase (219 aa).

9-16 (GIEGSGKT) is a binding site for ATP.

This sequence belongs to the thymidylate kinase family.

It catalyses the reaction dTMP + ATP = dTDP + ADP. Its function is as follows. Phosphorylation of dTMP to form dTDP in both de novo and salvage pathways of dTTP synthesis. In Pelobacter propionicus (strain DSM 2379 / NBRC 103807 / OttBd1), this protein is Thymidylate kinase.